A 727-amino-acid chain; its full sequence is MDAKVEDNIAGKCPMGHGRGPANRDWWPQSLRLEGLNQHAPRSNPMGEAFDYAEAFKSLDLDAVVSDLHALMTDSQEWWPADFGHYGGLFIRLAWHAAGTYRITDGRGGAGGGQQRFAPLNSWPDNTNLDKARRLLWPIKQKYGAKLSWADLYVLVGNVALESMGFKTFGFAGGRADQWEPEELYWGPESTWLDDKRYSGERELDSPLGAVQMGLIYVNPEGPNGNPDPLASARDIRETFARMAMNDEETVALIAGGHTFGKAHGAGDASLVGVEPEGGAIEAQGFGWASKHGTGKGPDAITGGPEVIWTQTPTRWSNHFFDNLFKYEWELTQSPAGAKQWQAKNAPADIPDAFDPNKTHVPRMLTSDLALRFDPAYEKISRRFYENPDQFADAFARAWFKLTHRDMGPIGRYLGPLVPKEELIWQDPIPAVDHPLADDKDIAALKAKILATGLSASDLVSTAWASASTYRQSDKRGGANGARIRLAPQKDWAVNNPPVLAKVLAALEGVQKDFNASAGGGKKISLADLIVLGGAAAIEKAAKDAGTSVTVPFAPGRMDASAEQTDAHSFEALEPRSDGFRNYRGPGKHYMAPEEALVDRAQLLGLSGPELTVLVGGLRVLGANADGSKDGVFTNRPGALSNDFFVNLLSMETTWSPTAANAFAGHDRKSSEPRWTATRVDLIFGSHAELRAFAEVYACADSQEKFVCDFVTAWNKVMNADRLDLAA.

Residues 1–21 are disordered; the sequence is MDAKVEDNIAGKCPMGHGRGP. A cross-link (tryptophyl-tyrosyl-methioninium (Trp-Tyr) (with M-243)) is located at residues 95–217; the sequence is WHAAGTYRIT…LGAVQMGLIY (123 aa). His-96 functions as the Proton acceptor in the catalytic mechanism. A cross-link (tryptophyl-tyrosyl-methioninium (Tyr-Met) (with W-95)) is located at residues 217–243; the sequence is YVNPEGPNGNPDPLASARDIRETFARM. His-258 serves as a coordination point for heme b.

The protein belongs to the peroxidase family. Peroxidase/catalase subfamily. In terms of assembly, homodimer or homotetramer. It depends on heme b as a cofactor. Formation of the three residue Trp-Tyr-Met cross-link is important for the catalase, but not the peroxidase activity of the enzyme.

It catalyses the reaction H2O2 + AH2 = A + 2 H2O. It carries out the reaction 2 H2O2 = O2 + 2 H2O. In terms of biological role, bifunctional enzyme with both catalase and broad-spectrum peroxidase activity. Important for stationary phase survival. The polypeptide is Catalase-peroxidase (Caulobacter vibrioides (strain ATCC 19089 / CIP 103742 / CB 15) (Caulobacter crescentus)).